A 407-amino-acid polypeptide reads, in one-letter code: 12S rRNA N(4)-cytidine methyltransferase METTL15 (407 aa).

Residues glycine 100–histidine 102, aspartate 119, phenylalanine 146, aspartate 169, and glutamine 176 contribute to the S-adenosyl-L-methionine site. Residue serine 358 is modified to Phosphoserine.

It belongs to the methyltransferase superfamily. RsmH family.

The protein resides in the mitochondrion matrix. It catalyses the reaction cytidine(839) in 12S rRNA + S-adenosyl-L-methionine = N(4)-methylcytidine(839) in 12S rRNA + S-adenosyl-L-homocysteine + H(+). In terms of biological role, N4-methylcytidine (m4C) methyltransferase responsible for the methylation of position C839 in mitochondrial 12S rRNA. Involved in the stabilization of 12S rRNA folding, therefore facilitating the assembly of the mitochondrial small ribosomal subunits. The sequence is that of 12S rRNA N(4)-cytidine methyltransferase METTL15 (METTL15) from Pongo abelii (Sumatran orangutan).